The chain runs to 244 residues: Gasdermin-like protein rcd-1-2 (244 aa).

The segment at 1-22 (MDNEEWFPLKQTHYPPPTIPSM) is disordered.

This sequence belongs to the gasdermin family. In terms of assembly, heterooligomer; the heterooligomer with rcd-1-1 forms a ring-shaped pore complex when inserted in the membrane.

Its subcellular location is the cytoplasm. The protein localises to the cell membrane. In terms of biological role, gasdermin-like protein involved in heterokaryon incompatibility, a process that ensures that during spontaneous vegetative cell fusion, only compatible cells from the same colony survive (non-self-recognition). In N.crassa, the rcd-1 locus exists as 2 incompatible alleles, rcd-1-1 (AC Q7SBA0) and rcd-1-2 (this entry). During the allorecognition process, forms a heterooligomer with rcd-1-1, thereby forming a functional gasdermin-like complex that binds to membranes and forms pores, triggering cell death. Binds negatively charged phospholipids, such as cardiolipin and phosphatidylserine. Also binds to phosphoinositides, preferentially to phosphatidylinositol-3-phosphate (PtdIns-3-P), PtdIns-5-P and PtdIns-3,5-P2. This Neurospora crassa protein is Gasdermin-like protein rcd-1-2.